The primary structure comprises 1053 residues: Polyphosphate kinase (1053 aa).

Disordered stretches follow at residues 23–155, 200–245, and 302–328; these read LKIN…QLME, VQNP…TKSK, and NNNNNDFKSSTMIGKPFSSGGDGSTSP. Residues 32–50 are compositionally biased toward low complexity; sequence STTTTTSTTTTTTTTTSTS. Over residues 81-102 the composition is skewed to acidic residues; that stretch reads VDFEDDYDEESSSFDEEDEDSA. A compositionally biased stretch (polar residues) spans 143-155; it reads TTANPVQNCQLME. The segment covering 215 to 239 has biased composition (low complexity); that stretch reads SSGSSSSSSSNNNNSNSNSNGNCNS. His800 (phosphohistidine intermediate) is an active-site residue. The segment at 1027–1053 is disordered; the sequence is RSSPIDEDSQTQFMNQTNQKHPVIWSK. The span at 1036–1046 shows a compositional bias: polar residues; the sequence is QTQFMNQTNQK.

Belongs to the polyphosphate kinase 1 (PPK1) family. Hexamer. May form higher oligomeric structures in the presence of ATP.

It localises to the vesicle. It carries out the reaction [phosphate](n) + ATP = [phosphate](n+1) + ADP. In terms of biological role, catalyzes the reversible transfer of the terminal phosphate of ATP to form a long-chain polyphosphate (polyP). Produces polyP in a broad range of chain lengths (50-300 Pi residues). Involved in development (growth and fruiting body formation), sporulation, phagocytosis, cell division and the late stages of cytokinesis. The protein is Polyphosphate kinase (ppkA) of Dictyostelium discoideum (Social amoeba).